Consider the following 372-residue polypeptide: Glutamate 5-kinase (372 aa).

Residue lysine 14 participates in ATP binding. Residues serine 54, aspartate 141, and asparagine 153 each coordinate substrate. 173–174 (TD) is an ATP binding site. The region spanning 280–358 (RGTLVLDDGA…DAIVGLLGYM (79 aa)) is the PUA domain.

It belongs to the glutamate 5-kinase family.

Its subcellular location is the cytoplasm. It carries out the reaction L-glutamate + ATP = L-glutamyl 5-phosphate + ADP. It functions in the pathway amino-acid biosynthesis; L-proline biosynthesis; L-glutamate 5-semialdehyde from L-glutamate: step 1/2. Its function is as follows. Catalyzes the transfer of a phosphate group to glutamate to form L-glutamate 5-phosphate. The chain is Glutamate 5-kinase from Pseudomonas fluorescens (strain Pf0-1).